The sequence spans 1790 residues: E3 ubiquitin-protein ligase RBBP6 (1790 aa).

Residues 4 to 76 (VHYKFSSKLN…NSSVIVRRIP (73 aa)) form the DWNN domain. K130 is subject to N6-acetyllysine. The CCHC-type zinc-finger motif lies at 160-177 (YTCFRCGKPGHYIKNCPT). Residues S245, S246, S247, and S248 each carry the phosphoserine modification. Residues 260-301 (CLICKDIMTDAVVIPCCGNSYCDECIRTALLESDEHTCPTCH) form an RING-type; degenerate zinc finger. The tract at residues 329–353 (YTKRLRKQLPPPPPPVPPPRPLMQR) is disordered. The segment covering 337–349 (LPPPPPPVPPPRP) has biased composition (pro residues). Residue S361 is modified to Phosphoserine. The tract at residues 374 to 408 (VTSSSAHSAPSISSLTSNPSALAPSVSGNPSSAPA) is disordered. Positions 376 to 390 (SSSAHSAPSISSLTS) are enriched in low complexity. S517 bears the Phosphoserine mark. 4 disordered regions span residues 533 to 599 (INRG…AGYS), 622 to 641 (QTAH…SREE), 648 to 667 (RLKE…NDFA), and 675 to 797 (KIQK…REYF). Over residues 558 to 599 (VPVPPPPLYPPPPHTLPLPPGVPPPQFSPQFPPGQPPPAGYS) the composition is skewed to pro residues. Residues 622 to 635 (QTAHSNTIPTTQAP) show a composition bias toward polar residues. The span at 686-720 (RSKSPYSGSSYSRSSYTYSKSRSGSTRSRSYSRSF) shows a compositional bias: low complexity. Positions 736-771 (RRGRGKSRNYRSRSRSHGYHRSRSRSPPYRRYHSRS) are enriched in basic residues. Phosphoserine occurs at positions 769, 771, 773, 781, 816, 862, and 874. 2 disordered regions span residues 850 to 1292 (AQPR…TKRT) and 1322 to 1790 (WDKD…SVTV). Positions 903 to 923 (LSTRDSHNAKDNPKSKEKESE) are enriched in basic and acidic residues. The span at 932–941 (NKHKKHRKRR) shows a compositional bias: basic residues. Composition is skewed to basic and acidic residues over residues 956-972 (ETSR…ETKT), 980-991 (SRDDATPVRDEP), 1002-1018 (VSDK…VKSD), 1042-1072 (PQEK…KIDS), and 1096-1161 (SAKE…KDFE). A Phosphoserine modification is found at S958. The interaction with RB1 stretch occupies residues 983–1139 (DATPVRDEPM…KAKKPEKNKL (157 aa)). Position 985 is a phosphothreonine (T985). Residues K1107 and K1169 each participate in a glycyl lysine isopeptide (Lys-Gly) (interchain with G-Cter in SUMO2) cross-link. Phosphoserine is present on S1179. Basic and acidic residues-rich tracts occupy residues 1182 to 1200 (RKME…KDKI) and 1231 to 1249 (EPSE…EKVK). Residues 1260 to 1277 (EGSSSTLVDYTSTSSTGG) show a composition bias toward polar residues. Position 1272 is a phosphothreonine (T1272). S1278 carries the phosphoserine modification. Residues 1281-1291 (RKSEEKTDTKR) are compositionally biased toward basic and acidic residues. 3 positions are modified to phosphoserine: S1329, S1342, and S1348. Residues 1336 to 1358 (TTQPIQSVGKPSSIIKNVTTKPS) show a composition bias toward polar residues. 5 stretches are compositionally biased toward basic and acidic residues: residues 1363–1392 (YTEK…ELRS), 1400–1440 (EKGR…EQGH), 1449–1460 (KETRTSEKHESV), 1469–1507 (TPGR…RGKE), and 1515–1580 (KLRE…RNGK). Residues 1434–1544 (RLSEQGHFKT…SPPRDKKPHD (111 aa)) are interaction with p53. Position 1469 is a phosphothreonine (T1469). Over residues 1618–1627 (LSHSSRLSSD) the composition is skewed to polar residues. The segment covering 1634–1646 (EAAFEPDYNESDS) has biased composition (acidic residues). Residues S1646, S1648, and S1651 each carry the phosphoserine modification. The segment covering 1663–1675 (KDLKEKTTEKAKE) has biased composition (basic and acidic residues). Residues 1689–1724 (RSQSQSSPSVSPSRSHSPSGSQTRSHSSSASSAGSQ) are compositionally biased toward low complexity. Residues 1727-1750 (KKKKKKKEKKKHKKHKKHKKHKKH) are compositionally biased toward basic residues. Residues 1751 to 1760 (AGADGDVEKS) are compositionally biased toward basic and acidic residues. Over residues 1761 to 1773 (QKHKHKKKKAKKN) the composition is skewed to basic residues. The segment covering 1774 to 1790 (KDKEKEKDDQKVRSVTV) has biased composition (basic and acidic residues).

In terms of assembly, interacts with MDM2 and YBX1. Also interacts with p53/TP53 and RB1. Interacts with NEK6. Interacts with ZBTB38. Phosphorylated by NEK6. In terms of tissue distribution, highly expressed in testis. Expressed at lower levels in brain, heart, kidney, liver, lung, skeletal muscle, spleen, thymus and tongue.

It is found in the nucleus. The protein localises to the nucleolus. Its subcellular location is the chromosome. It localises to the cytoplasm. The protein resides in the cytoskeleton. It is found in the microtubule organizing center. The protein localises to the centrosome. The catalysed reaction is S-ubiquitinyl-[E2 ubiquitin-conjugating enzyme]-L-cysteine + [acceptor protein]-L-lysine = [E2 ubiquitin-conjugating enzyme]-L-cysteine + N(6)-ubiquitinyl-[acceptor protein]-L-lysine.. Its pathway is protein modification; protein ubiquitination. In terms of biological role, E3 ubiquitin-protein ligase which promotes ubiquitination of YBX1, leading to its degradation by the proteasome. May play a role as a scaffold protein to promote the assembly of the p53/TP53-MDM2 complex, resulting in increase of MDM2-mediated ubiquitination and degradation of p53/TP53; may function as negative regulator of p53/TP53, leading to both apoptosis and cell growth retardation. Regulates DNA-replication and common fragile sites (CFS) stability in a ZBTB38- and MCM10-dependent manner. Controls ZBTB38 protein stability and abundance via ubiquitination and proteasomal degradation, and ZBTB38 in turn negatively regulates the expression of MCM10 which plays an important role in DNA-replication. This is E3 ubiquitin-protein ligase RBBP6 (Rbbp6) from Mus musculus (Mouse).